The primary structure comprises 310 residues: UPF0761 membrane protein VFMJ11_0098 (310 aa).

The next 6 membrane-spanning stretches (helical) occupy residues tyrosine 34–leucine 54, methionine 97–aspartate 117, phenylalanine 136–alanine 156, leucine 178–valine 198, histidine 207–alanine 227, and alanine 242–isoleucine 262.

Belongs to the UPF0761 family.

It is found in the cell inner membrane. This Aliivibrio fischeri (strain MJ11) (Vibrio fischeri) protein is UPF0761 membrane protein VFMJ11_0098.